The primary structure comprises 174 residues: Adipose-secreted signaling protein (174 aa).

Residue Ala-2 is modified to N-acetylalanine. Position 147 is a phosphothreonine (Thr-147).

It belongs to the ADISSP family. In terms of tissue distribution, expression is adipose-specific and highly brown adipose tissue-enriched.

The protein resides in the secreted. Its function is as follows. Adipocyte-secreted protein (adipokine) that acts as a key regulator for white adipose tissue (WAT) thermogenesis and glucose homeostasis at least in part through activation of protein kinase A (PKA). In Mus musculus (Mouse), this protein is Adipose-secreted signaling protein.